Reading from the N-terminus, the 971-residue chain is Isoleucine--tRNA ligase (971 aa).

A 'HIGH' region motif is present at residues 64-74; it reads PYANGHIHIGH. Residue glutamate 602 coordinates L-isoleucyl-5'-AMP. The short motif at 643-647 is the 'KMSKS' region element; sequence KMSKS. Lysine 646 is an ATP binding site.

This sequence belongs to the class-I aminoacyl-tRNA synthetase family. IleS type 1 subfamily. In terms of assembly, monomer.

Its subcellular location is the cytoplasm. The catalysed reaction is tRNA(Ile) + L-isoleucine + ATP = L-isoleucyl-tRNA(Ile) + AMP + diphosphate. Its function is as follows. Catalyzes the attachment of isoleucine to tRNA(Ile). As IleRS can inadvertently accommodate and process structurally similar amino acids such as valine, to avoid such errors it has two additional distinct tRNA(Ile)-dependent editing activities. One activity is designated as 'pretransfer' editing and involves the hydrolysis of activated Val-AMP. The other activity is designated 'posttransfer' editing and involves deacylation of mischarged Val-tRNA(Ile). This Bartonella quintana (strain Toulouse) (Rochalimaea quintana) protein is Isoleucine--tRNA ligase.